Reading from the N-terminus, the 163-residue chain is Probable protein tyrosine phosphatase type IVA B (163 aa).

The Tyrosine-protein phosphatase domain occupies 10–161 (TIIESSTHKF…YKASKKAGCK (152 aa)). A disulfide bridge links Cys-49 with Cys-104. The Proton donor role is filled by Asp-70. The Phosphocysteine intermediate role is filled by Cys-104. Position 105–110 (105–110 (IAGLGR)) interacts with phosphate. Arg-110 serves as a coordination point for substrate. The residue at position 160 (Cys-160) is a Cysteine methyl ester. The S-farnesyl cysteine moiety is linked to residue Cys-160. Positions 161-163 (KIM) are cleaved as a propeptide — removed in mature form.

Belongs to the protein-tyrosine phosphatase family.

The protein localises to the membrane. The enzyme catalyses O-phospho-L-tyrosyl-[protein] + H2O = L-tyrosyl-[protein] + phosphate. The sequence is that of Probable protein tyrosine phosphatase type IVA B from Dictyostelium discoideum (Social amoeba).